Here is a 305-residue protein sequence, read N- to C-terminus: Tyrosine recombinase XerD (305 aa).

A Core-binding (CB) domain is found at 3–88 (PADASVIERF…TLRAFYGLCL (86 aa)). One can recognise a Tyr recombinase domain in the interval 109 to 299 (SLPKALTESQ…ARQHLQKLHA (191 aa)). Active-site residues include R149, K173, H251, R254, and H277. The active-site O-(3'-phospho-DNA)-tyrosine intermediate is Y286.

It belongs to the 'phage' integrase family. XerD subfamily. As to quaternary structure, forms a cyclic heterotetrameric complex composed of two molecules of XerC and two molecules of XerD.

It is found in the cytoplasm. Functionally, site-specific tyrosine recombinase, which acts by catalyzing the cutting and rejoining of the recombining DNA molecules. The XerC-XerD complex is essential to convert dimers of the bacterial chromosome into monomers to permit their segregation at cell division. It also contributes to the segregational stability of plasmids. The polypeptide is Tyrosine recombinase XerD (Xanthomonas axonopodis pv. citri (strain 306)).